The following is a 74-amino-acid chain: Putative membrane protein insertion efficiency factor (74 aa).

It belongs to the UPF0161 family.

Its subcellular location is the cell membrane. Functionally, could be involved in insertion of integral membrane proteins into the membrane. This Anoxybacillus flavithermus (strain DSM 21510 / WK1) protein is Putative membrane protein insertion efficiency factor.